Consider the following 345-residue polypeptide: S-adenosylmethionine:tRNA ribosyltransferase-isomerase (345 aa).

Belongs to the QueA family. As to quaternary structure, monomer.

It localises to the cytoplasm. It catalyses the reaction 7-aminomethyl-7-carbaguanosine(34) in tRNA + S-adenosyl-L-methionine = epoxyqueuosine(34) in tRNA + adenine + L-methionine + 2 H(+). Its pathway is tRNA modification; tRNA-queuosine biosynthesis. Functionally, transfers and isomerizes the ribose moiety from AdoMet to the 7-aminomethyl group of 7-deazaguanine (preQ1-tRNA) to give epoxyqueuosine (oQ-tRNA). The sequence is that of S-adenosylmethionine:tRNA ribosyltransferase-isomerase from Thermus thermophilus (strain ATCC BAA-163 / DSM 7039 / HB27).